A 73-amino-acid polypeptide reads, in one-letter code: UPF0057 membrane protein At4g30650 (73 aa).

A run of 2 helical transmembrane segments spans residues 4 to 24 (NMEVFCEILIAILLPPLGVCL) and 37 to 57 (LVLTILGYIPGIIYALYVIVF).

This sequence belongs to the UPF0057 (PMP3) family.

Its subcellular location is the membrane. This chain is UPF0057 membrane protein At4g30650, found in Arabidopsis thaliana (Mouse-ear cress).